Reading from the N-terminus, the 274-residue chain is uncharacterized protein (274 aa).

The segment covering 1 to 15 has biased composition (basic and acidic residues); that stretch reads MEESKTKRKEDRIDL. Residues 1–40 form a disordered region; that stretch reads MEESKTKRKEDRIDLKNTPPQKKSKRDSTNDETARTSLRS. One can recognise a G-patch domain in the interval 41 to 87; the sequence is IMPRGYKMMENMGYKEGETLGSNESALKEPIKVEINTKRRGIRAEKP.

The protein localises to the cytoplasm. It is found in the nucleus. This is an uncharacterized protein from Saccharomyces cerevisiae (strain ATCC 204508 / S288c) (Baker's yeast).